The sequence spans 635 residues: PTS system fructose-specific EIIABC component (635 aa).

Residues 5 to 149 (ELLTKHTIKL…DAIIDIINQH (145 aa)) enclose the PTS EIIA type-2 domain. His67 acts as the Tele-phosphohistidine intermediate; for EIIA activity in catalysis. His67 bears the Phosphohistidine; by HPr mark. The tract at residues 149–168 (HDKDDDEEEEEEEAAPAPAG) is disordered. Residues 152–162 (DDDEEEEEEEA) are compositionally biased toward acidic residues. The region spanning 172-267 (ILAVTACPTG…PQELIEKAMN (96 aa)) is the PTS EIIB type-2 domain. Catalysis depends on Cys178, which acts as the Phosphocysteine intermediate; for EIIB activity. Cys178 bears the Phosphocysteine; by EIIA mark. The disordered stretch occupies residues 273 to 293 (YQGSGGGSAASNDDEEAKGKS). Positions 301–635 (FYKHLMSGVS…GIVKKPVTEK (335 aa)) constitute a PTS EIIC type-2 domain. A run of 9 helical transmembrane segments spans residues 312–332 (MLPF…WGIH), 350–370 (FIGG…FIAM), 392–412 (NAGF…VILL), 428–448 (PVLI…QFVV), 470–490 (NLVL…GGPL), 511–531 (AAIM…TTIF), 544–564 (ITCY…FAAA), 569–589 (VIPA…FFRV), and 608–628 (MLYL…LGIV).

It is found in the cell membrane. The catalysed reaction is D-fructose(out) + N(pros)-phospho-L-histidyl-[protein] = D-fructose 1-phosphate(in) + L-histidyl-[protein]. Functionally, the phosphoenolpyruvate-dependent sugar phosphotransferase system (sugar PTS), a major carbohydrate active transport system, catalyzes the phosphorylation of incoming sugar substrates concomitantly with their translocation across the cell membrane. This system is involved in fructose transport. In Bacillus subtilis (strain 168), this protein is PTS system fructose-specific EIIABC component (fruA).